We begin with the raw amino-acid sequence, 450 residues long: L-galactonate dehydratase (450 aa).

The active site involves Lys-221. Asp-251, Glu-277, and Glu-306 together coordinate Mg(2+). His-356 is an active-site residue.

The protein belongs to the mandelate racemase/muconate lactonizing enzyme family. Requires Mg(2+) as cofactor.

It catalyses the reaction L-galactonate = 2-dehydro-3-deoxy-L-galactonate + H2O. Its pathway is carbohydrate acid metabolism. Its function is as follows. Mediates the conversion of L-galactonate to 2-dehydro-3-deoxy-L-galactonate, the second step in D-galacturonate catabolic process. The sequence is that of L-galactonate dehydratase (lgd1) from Hypocrea jecorina (Trichoderma reesei).